The chain runs to 302 residues: Sulfate adenylyltransferase subunit 2 (302 aa).

Belongs to the PAPS reductase family. CysD subfamily. Heterodimer composed of CysD, the smaller subunit, and CysN.

It catalyses the reaction sulfate + ATP + H(+) = adenosine 5'-phosphosulfate + diphosphate. It participates in sulfur metabolism; hydrogen sulfide biosynthesis; sulfite from sulfate: step 1/3. Functionally, with CysN forms the ATP sulfurylase (ATPS) that catalyzes the adenylation of sulfate producing adenosine 5'-phosphosulfate (APS) and diphosphate, the first enzymatic step in sulfur assimilation pathway. APS synthesis involves the formation of a high-energy phosphoric-sulfuric acid anhydride bond driven by GTP hydrolysis by CysN coupled to ATP hydrolysis by CysD. This chain is Sulfate adenylyltransferase subunit 2, found in Salmonella paratyphi A (strain AKU_12601).